Here is a 472-residue protein sequence, read N- to C-terminus: Eukaryotic translation initiation factor 2 subunit 3 (472 aa).

The tr-type G domain maps to 39–247 (QATINIGTIG…YIVNKIPVPV (209 aa)). A G1 region spans residues 48–55 (GHVAHGKS). 51–56 (AHGKST) lines the GTP pocket. Residues 76-80 (NITIK) form a G2 region. Residues 134–137 (DCPG) form a G3 region. GTP contacts are provided by residues 190 to 193 (NKID) and 225 to 227 (SAQ). Residues 190–193 (NKID) form a G4 region. Positions 225 to 227 (SAQ) are G5. The interacts with cdc123 stretch occupies residues 457 to 469 (GQIRRGVTITPTV).

It belongs to the TRAFAC class translation factor GTPase superfamily. Classic translation factor GTPase family. EIF2G subfamily. In terms of assembly, eukaryotic translation initiation factor 2 eIF2 is a heterotrimeric complex composed of an alpha (EIF2S1), a beta (EIF2S2) and a gamma (EIF2S3) chain. eIF2 is member of the 43S pre-initiation complex (43S PIC).

The protein localises to the cytoplasm. It is found in the cytosol. The catalysed reaction is GTP + H2O = GDP + phosphate + H(+). Its function is as follows. Member of the eIF2 complex that functions in the early steps of protein synthesis by forming a ternary complex with GTP and initiator tRNA. This complex binds to a 40S ribosomal subunit, followed by mRNA binding to form the 43S pre-initiation complex (43S PIC). Junction of the 60S ribosomal subunit to form the 80S initiation complex is preceded by hydrolysis of the GTP bound to eIF2 and release of an eIF2-GDP binary complex. In order for eIF2 to recycle and catalyze another round of initiation, the GDP bound to eIF2 must exchange with GTP by way of a reaction catalyzed by eIF-2B. The polypeptide is Eukaryotic translation initiation factor 2 subunit 3 (Danio rerio (Zebrafish)).